A 330-amino-acid chain; its full sequence is Glycerol-3-phosphate dehydrogenase [NAD(P)+] (330 aa).

Positions 11, 33, and 105 each coordinate NADPH. Positions 105, 133, and 135 each coordinate sn-glycerol 3-phosphate. Ala137 contacts NADPH. Positions 188, 241, 251, 252, and 253 each coordinate sn-glycerol 3-phosphate. Residue Lys188 is the Proton acceptor of the active site. Arg252 provides a ligand contact to NADPH. NADPH contacts are provided by Val276 and Glu278.

Belongs to the NAD-dependent glycerol-3-phosphate dehydrogenase family.

The protein localises to the cytoplasm. It carries out the reaction sn-glycerol 3-phosphate + NAD(+) = dihydroxyacetone phosphate + NADH + H(+). The enzyme catalyses sn-glycerol 3-phosphate + NADP(+) = dihydroxyacetone phosphate + NADPH + H(+). The protein operates within membrane lipid metabolism; glycerophospholipid metabolism. In terms of biological role, catalyzes the reduction of the glycolytic intermediate dihydroxyacetone phosphate (DHAP) to sn-glycerol 3-phosphate (G3P), the key precursor for phospholipid synthesis. This chain is Glycerol-3-phosphate dehydrogenase [NAD(P)+], found in Acidovorax sp. (strain JS42).